We begin with the raw amino-acid sequence, 223 residues long: Phosphoribosylformylglycinamidine synthase subunit PurQ (223 aa).

One can recognise a Glutamine amidotransferase type-1 domain in the interval 3-223; that stretch reads SAVVQLPGLN…FASALDVIAA (221 aa). Cys86 functions as the Nucleophile in the catalytic mechanism. Residues His196 and Glu198 contribute to the active site.

As to quaternary structure, part of the FGAM synthase complex composed of 1 PurL, 1 PurQ and 2 PurS subunits.

The protein localises to the cytoplasm. It carries out the reaction N(2)-formyl-N(1)-(5-phospho-beta-D-ribosyl)glycinamide + L-glutamine + ATP + H2O = 2-formamido-N(1)-(5-O-phospho-beta-D-ribosyl)acetamidine + L-glutamate + ADP + phosphate + H(+). The catalysed reaction is L-glutamine + H2O = L-glutamate + NH4(+). It functions in the pathway purine metabolism; IMP biosynthesis via de novo pathway; 5-amino-1-(5-phospho-D-ribosyl)imidazole from N(2)-formyl-N(1)-(5-phospho-D-ribosyl)glycinamide: step 1/2. Its function is as follows. Part of the phosphoribosylformylglycinamidine synthase complex involved in the purines biosynthetic pathway. Catalyzes the ATP-dependent conversion of formylglycinamide ribonucleotide (FGAR) and glutamine to yield formylglycinamidine ribonucleotide (FGAM) and glutamate. The FGAM synthase complex is composed of three subunits. PurQ produces an ammonia molecule by converting glutamine to glutamate. PurL transfers the ammonia molecule to FGAR to form FGAM in an ATP-dependent manner. PurS interacts with PurQ and PurL and is thought to assist in the transfer of the ammonia molecule from PurQ to PurL. The sequence is that of Phosphoribosylformylglycinamidine synthase subunit PurQ from Rhizobium johnstonii (strain DSM 114642 / LMG 32736 / 3841) (Rhizobium leguminosarum bv. viciae).